The sequence spans 350 residues: Bifunctional UDP-glucose 4-epimerase and UDP-xylose 4-epimerase 1 (350 aa).

NAD(+) contacts are provided by residues 15 to 17 (GFI), 36 to 40 (DNFDN), 67 to 68 (DL), phenylalanine 89, and lysine 93. Serine 133 lines the substrate pocket. Catalysis depends on tyrosine 157, which acts as the Proton acceptor. Lysine 161 and tyrosine 185 together coordinate NAD(+).

The protein belongs to the NAD(P)-dependent epimerase/dehydratase family. NAD(+) is required as a cofactor.

The catalysed reaction is UDP-alpha-D-glucose = UDP-alpha-D-galactose. The enzyme catalyses UDP-beta-L-arabinopyranose = UDP-alpha-D-xylose. It participates in carbohydrate metabolism; galactose metabolism. It functions in the pathway nucleotide-sugar biosynthesis; UDP-L-arabinose biosynthesis; UDP-L-arabinose from UDP-alpha-D-xylose: step 1/1. Its pathway is cell wall biogenesis; cell wall polysaccharide biosynthesis. With respect to regulation, inhibited by Hg(2+). Functionally, catalyzes the interconversion between UDP-glucose and UDP-galactose and the interconversion between UDP-arabinose and UDP-xylose. The chain is Bifunctional UDP-glucose 4-epimerase and UDP-xylose 4-epimerase 1 from Pisum sativum (Garden pea).